The primary structure comprises 156 residues: ATP synthase subunit b (156 aa).

A helical transmembrane segment spans residues 3–23; that stretch reads INFTLLAQALAFAGLIWIIAT.

It belongs to the ATPase B chain family. F-type ATPases have 2 components, F(1) - the catalytic core - and F(0) - the membrane proton channel. F(1) has five subunits: alpha(3), beta(3), gamma(1), delta(1), epsilon(1). F(0) has three main subunits: a(1), b(2) and c(10-14). The alpha and beta chains form an alternating ring which encloses part of the gamma chain. F(1) is attached to F(0) by a central stalk formed by the gamma and epsilon chains, while a peripheral stalk is formed by the delta and b chains.

It localises to the cell membrane. Functionally, f(1)F(0) ATP synthase produces ATP from ADP in the presence of a proton or sodium gradient. F-type ATPases consist of two structural domains, F(1) containing the extramembraneous catalytic core and F(0) containing the membrane proton channel, linked together by a central stalk and a peripheral stalk. During catalysis, ATP synthesis in the catalytic domain of F(1) is coupled via a rotary mechanism of the central stalk subunits to proton translocation. Its function is as follows. Component of the F(0) channel, it forms part of the peripheral stalk, linking F(1) to F(0). This Stenotrophomonas maltophilia (strain K279a) protein is ATP synthase subunit b.